A 268-amino-acid chain; its full sequence is Undecaprenyl-diphosphatase 1 (268 aa).

7 consecutive transmembrane segments (helical) span residues 5-25, 43-63, 81-101, 107-127, 185-205, 214-234, and 248-268; these read TIVE…IPVS, GKAF…SVYF, HFVI…ALAH, VLFE…VILL, AEFS…FDLF, ADLP…LFVV, and LFGW…MIWG.

Belongs to the UppP family.

Its subcellular location is the cell inner membrane. The enzyme catalyses di-trans,octa-cis-undecaprenyl diphosphate + H2O = di-trans,octa-cis-undecaprenyl phosphate + phosphate + H(+). Functionally, catalyzes the dephosphorylation of undecaprenyl diphosphate (UPP). Confers resistance to bacitracin. This is Undecaprenyl-diphosphatase 1 from Mesorhizobium japonicum (strain LMG 29417 / CECT 9101 / MAFF 303099) (Mesorhizobium loti (strain MAFF 303099)).